The sequence spans 1653 residues: Protein strawberry notch (1653 aa).

Disordered regions lie at residues 1–46 (MTSK…GRDL), 190–211 (GSPAARSSGNAGTTGSSQGGAI), 237–265 (GSNAPPPPPPSTAANSVRHSPTGGIPNPG), 317–345 (NNQKPPPIATTPGSGGPAGGAPGSGVKGN), and 883–1043 (SVAD…PSGS). Over residues 11-36 (DADDDNDNFDEDDSGSDFDDDEDPDQ) the composition is skewed to acidic residues. S24 and S26 each carry phosphoserine. Positions 194–205 (ARSSGNAGTTGS) are enriched in polar residues. Residues 256 to 265 (SPTGGIPNPG) are compositionally biased toward low complexity. Over residues 329–342 (GSGGPAGGAPGSGV) the composition is skewed to gly residues. Positions 883–901 (SVADSTSSLSNNSNITTAA) are enriched in low complexity. S929 and S931 each carry phosphoserine. Over residues 966–975 (IDDEDEDHDV) the composition is skewed to acidic residues. Over residues 980–998 (RSVASDASSDFNPFFSGSD) the composition is skewed to polar residues. The span at 1008–1027 (RSKKSKKAQKKSKKKVKKEK) shows a compositional bias: basic residues. Residues 1064-1125 (LSTQDKIQDL…RKIERLGARL (62 aa)) are a coiled coil.

It belongs to the SBNO family. In terms of assembly, interacts with vg for function in the wing disk. Interacts with Su(H) for function in the eye disk. At stage 8, when the formation of the midline precursor cells depends on Notch signaling, high level of expression is seen in the midline precursor cells and a lower level in the surrounding epidermal cells. Between stages 11 and 14, expression is uniform throughout the epidermis, and at stage 16, high level of expression is restricted to the central nervous system. Expressed in the larval leg, wing and eye imaginal disks. Expression is over the wing disk and accumulates within the pleural region.

The protein resides in the nucleus. Its function is as follows. Notch pathway component, may contribute to the specificity between lateral and inductive Notch signaling pathways in the wing disk. Required during many developmental stages including oogenesis, embryogenesis and imaginal development of the eye, wing and leg. Ebi and sno regulate EGFR-dependent Delta transcription in the developing eye, by antagonizing a repressor function of Suppressor of Hairless (Su(H)). They are required in the R-cells for normal cone cell development. In Drosophila melanogaster (Fruit fly), this protein is Protein strawberry notch.